The chain runs to 124 residues: Seripauperin-23 (124 aa).

The N-terminal stretch at 1–20 (MVKLTSIVAGVAAIAAGVAA) is a signal peptide.

The protein belongs to the SRP1/TIP1 family. Seripauperin subfamily. O-glycosylated.

Its subcellular location is the secreted. It localises to the cell wall. Component of the cell wall. This Saccharomyces cerevisiae (strain ATCC 204508 / S288c) (Baker's yeast) protein is Seripauperin-23 (PAU23).